The primary structure comprises 194 residues: Adenylate kinase (194 aa).

Residue 10–15 (GAGKGT) participates in ATP binding. The NMP stretch occupies residues 30-59 (STGDMLRAAVAQQSEIGKRAKAVMDAGQLV). Residues threonine 31, arginine 36, 57-59 (QLV), 85-88 (GYPR), and glutamine 92 contribute to the AMP site. Residues 126 to 142 (SRVAETIAKGGQVRSDD) form an LID region. Arginine 127 contacts ATP. Positions 139 and 150 each coordinate AMP. Position 178 (alanine 178) interacts with ATP.

It belongs to the adenylate kinase family. Monomer.

The protein resides in the cytoplasm. The catalysed reaction is AMP + ATP = 2 ADP. Its pathway is purine metabolism; AMP biosynthesis via salvage pathway; AMP from ADP: step 1/1. Functionally, catalyzes the reversible transfer of the terminal phosphate group between ATP and AMP. Plays an important role in cellular energy homeostasis and in adenine nucleotide metabolism. This is Adenylate kinase from Brucella canis (strain ATCC 23365 / NCTC 10854 / RM-666).